A 305-amino-acid polypeptide reads, in one-letter code: Superkiller complex protein 8 (305 aa).

7 WD repeats span residues 14-57 (AHED…LELQ), 62-101 (GHQLGVVSVNISQNGAIAASSSLDAHIRLWDLETGKQIKS), 104-143 (AGPVDAWTVAFSPDSKYIATGSHLGKVNIFGVESGKKEHS), 146-187 (TRGK…HTLE), 188-227 (GHAMPIRSLTFSPDSQLLVTASDDGYIKIYDVQHANLAGT), 230-269 (GHGSWVLSVAFSPDDTHFVSSSSDKSIKVWDTSSRSCVNT), and 272-305 (DHQDQVWSVKYNPTGSKIVSAGDDRAIHIYDCPM).

Belongs to the SKI8 family. Component of the PAF1 complex. Component of the SKI complex.

The protein localises to the nucleus. The protein resides in the cytoplasm. In terms of biological role, component of the PAF1 complex (PAF1C) which has multiple functions during transcription by RNA polymerase II and is implicated in regulation of development and maintenance of embryonic stem cell pluripotency. PAF1C associates with RNA polymerase II through interaction with POLR2A CTD non-phosphorylated and 'Ser-2'- and 'Ser-5'-phosphorylated forms and is involved in transcriptional elongation, acting both independently and synergistically with TCEA1 and in cooperation with the DSIF complex and HTATSF1. Also acts as a component of the SKI complex, a multiprotein complex that assists the RNA-degrading exosome during the mRNA decay and quality-control pathways. The SKI complex catalyzes mRNA extraction from 80S ribosomal complexes in the 3'-5' direction and channels mRNA to the cytosolic exosome for degradation. This Danio rerio (Zebrafish) protein is Superkiller complex protein 8 (skic8).